The primary structure comprises 154 residues: Myoglobin (154 aa).

The Globin domain maps to Gly-2–Lys-148. Ser-4 is modified (phosphoserine). Nitrite is bound at residue His-65. An O2-binding site is contributed by His-65. Position 94 (His-94) interacts with heme b.

This sequence belongs to the globin family. In terms of assembly, monomeric.

It is found in the cytoplasm. The protein resides in the sarcoplasm. The enzyme catalyses Fe(III)-heme b-[protein] + nitric oxide + H2O = Fe(II)-heme b-[protein] + nitrite + 2 H(+). It catalyses the reaction H2O2 + AH2 = A + 2 H2O. Monomeric heme protein which primary function is to store oxygen and facilitate its diffusion within muscle tissues. Reversibly binds oxygen through a pentacoordinated heme iron and enables its timely and efficient release as needed during periods of heightened demand. Depending on the oxidative conditions of tissues and cells, and in addition to its ability to bind oxygen, it also has a nitrite reductase activity whereby it regulates the production of bioactive nitric oxide. Under stress conditions, like hypoxia and anoxia, it also protects cells against reactive oxygen species thanks to its pseudoperoxidase activity. The sequence is that of Myoglobin (MB) from Equus quagga burchellii (Burchell's zebra).